Consider the following 819-residue polypeptide: Protein EFR3 homolog A (819 aa).

A disordered region spans residues 210–230 (DTDSRTGPPASPTTGDKEENP).

This sequence belongs to the EFR3 family. Component of a phosphatidylinositol 4-kinase (PI4K) complex. Palmitoylated at its N-terminus, anchoring the protein to the plasma membrane.

It is found in the cell membrane. Its function is as follows. Component of a complex required to localize phosphatidylinositol 4-kinase (PI4K) to the plasma membrane. The complex acts as a regulator of phosphatidylinositol 4-phosphate (PtdIns(4)P) synthesis. In the complex, efr3a probably acts as the membrane-anchoring component. This chain is Protein EFR3 homolog A (efr3a), found in Xenopus laevis (African clawed frog).